Consider the following 220-residue polypeptide: MKTDFWLQRWSAGQIGFHQSEVNQDLQQYWSSLSVAPGARVLVPLCGKSQDMSWLRGQGYHVVGAELSEAAVESYFTERGEQPQITSQGDFKVYAAPGIEIWCGDFFALTVRDIGHCAAFYDRAAMIALPADMRERYVRQLEALMPQACSGLLITLEYDQTLLEGPPFSVPRTWLQRVMSGNWEVTKVGGQDTLHSSPKALKAGLERMDEHVYVLERQSR.

Trp10, Leu45, Glu66, and Arg123 together coordinate S-adenosyl-L-methionine.

It belongs to the class I-like SAM-binding methyltransferase superfamily. TPMT family.

The protein localises to the cytoplasm. The enzyme catalyses S-adenosyl-L-methionine + a thiopurine = S-adenosyl-L-homocysteine + a thiopurine S-methylether.. The protein is Thiopurine S-methyltransferase of Pseudomonas syringae pv. syringae (strain B728a).